The primary structure comprises 239 residues: Tetrahydromethanopterin S-methyltransferase subunit A (239 aa).

Over 1–215 the chain is Cytoplasmic; it reads MADKKAPAAG…EAAMIAKFNS (215 aa). His85 contributes to the 5-hydroxybenzimidazolylcob(I)amide binding site. A helical membrane pass occupies residues 216 to 238; it reads GYYNGKIQGIAIGLFLSIVIFSL. Residue Leu239 is a topological domain, extracellular.

It belongs to the MtrA family. The complex is composed of 8 subunits; MtrA, MtrB, MtrC, MtrD, MtrE, MtrF, MtrG and MtrH. Requires 5-hydroxybenzimidazolylcob(I)amide as cofactor.

Its subcellular location is the cell membrane. The catalysed reaction is 5-methyl-5,6,7,8-tetrahydromethanopterin + coenzyme M + 2 Na(+)(in) = 5,6,7,8-tetrahydromethanopterin + methyl-coenzyme M + 2 Na(+)(out). The protein operates within one-carbon metabolism; methanogenesis from CO(2); methyl-coenzyme M from 5,10-methylene-5,6,7,8-tetrahydromethanopterin: step 2/2. Functionally, part of a complex that catalyzes the formation of methyl-coenzyme M and tetrahydromethanopterin from coenzyme M and methyl-tetrahydromethanopterin. This is an energy-conserving, sodium-ion translocating step. The chain is Tetrahydromethanopterin S-methyltransferase subunit A from Methanococcus maripaludis (strain DSM 14266 / JCM 13030 / NBRC 101832 / S2 / LL).